Here is a 266-residue protein sequence, read N- to C-terminus: Nickel import ATP-binding protein NikE (266 aa).

In terms of domain architecture, ABC transporter spans 4–252 (ISADNIVKIY…RHPASRLLRE (249 aa)). 45-52 (GRSGCGKS) is an ATP binding site.

The protein belongs to the ABC transporter superfamily. Nickel importer (TC 3.A.1.5.3) family. The complex is composed of two ATP-binding proteins (NikD and NikE), two transmembrane proteins (NikB and NikC) and a solute-binding protein (NikA).

The protein resides in the cell inner membrane. The catalysed reaction is Ni(2+)(out) + ATP + H2O = Ni(2+)(in) + ADP + phosphate + H(+). Part of the ABC transporter complex NikABCDE involved in nickel import. Responsible for energy coupling to the transport system. This is Nickel import ATP-binding protein NikE from Brucella abortus (strain 2308).